Consider the following 462-residue polypeptide: Argininosuccinate lyase (462 aa).

It belongs to the lyase 1 family. Argininosuccinate lyase subfamily.

It localises to the cytoplasm. The enzyme catalyses 2-(N(omega)-L-arginino)succinate = fumarate + L-arginine. Its pathway is amino-acid biosynthesis; L-arginine biosynthesis; L-arginine from L-ornithine and carbamoyl phosphate: step 3/3. In Prochlorococcus marinus (strain MIT 9211), this protein is Argininosuccinate lyase.